Consider the following 135-residue polypeptide: 2-iminobutanoate/2-iminopropanoate deaminase (135 aa).

Serine 2 is subject to N-acetylserine. Lysine 13, lysine 60, lysine 67, and lysine 134 each carry N6-succinyllysine.

It belongs to the RutC family. In terms of assembly, homotrimer. Interacts with YTHDF2. As to expression, expressed predominantly in liver and kidney. Lower levels in lung and brain.

Its subcellular location is the cytoplasm. It localises to the nucleus. The protein localises to the peroxisome. It is found in the mitochondrion. The enzyme catalyses 2-iminobutanoate + H2O = 2-oxobutanoate + NH4(+). The catalysed reaction is 2-iminopropanoate + H2O = pyruvate + NH4(+). In terms of biological role, catalyzes the hydrolytic deamination of enamine/imine intermediates that form during the course of normal metabolism. May facilitate the release of ammonia from these potentially toxic reactive metabolites, reducing their impact on cellular components. It may act on enamine/imine intermediates formed by several types of pyridoxal-5'-phosphate-dependent dehydratases including L-threonine dehydratase. Functionally, also promotes endoribonucleolytic cleavage of some transcripts by promoting recruitment of the ribonuclease P/MRP complex. Acts by bridging YTHDF2 and the ribonuclease P/MRP complex. RIDA/HRSP12 binds to N6-methyladenosine (m6A)-containing mRNAs containing a 5'-GGUUC-3' motif: cooperative binding of RIDA/HRSP12 and YTHDF2 to such transcripts lead to recruitment of the ribonuclease P/MRP complex and subsequent endoribonucleolytic cleavage. In Mus musculus (Mouse), this protein is 2-iminobutanoate/2-iminopropanoate deaminase.